A 425-amino-acid polypeptide reads, in one-letter code: Serine--tRNA ligase (425 aa).

Residue 228–230 coordinates L-serine; it reads TAE. 259 to 261 serves as a coordination point for ATP; it reads RSE. Glu-282 is a binding site for L-serine. 346–349 is an ATP binding site; that stretch reads EIAS. Ser-382 contacts L-serine.

This sequence belongs to the class-II aminoacyl-tRNA synthetase family. Type-1 seryl-tRNA synthetase subfamily. Homodimer. The tRNA molecule binds across the dimer.

It localises to the cytoplasm. The enzyme catalyses tRNA(Ser) + L-serine + ATP = L-seryl-tRNA(Ser) + AMP + diphosphate + H(+). The catalysed reaction is tRNA(Sec) + L-serine + ATP = L-seryl-tRNA(Sec) + AMP + diphosphate + H(+). It participates in aminoacyl-tRNA biosynthesis; selenocysteinyl-tRNA(Sec) biosynthesis; L-seryl-tRNA(Sec) from L-serine and tRNA(Sec): step 1/1. Its function is as follows. Catalyzes the attachment of serine to tRNA(Ser). Is also able to aminoacylate tRNA(Sec) with serine, to form the misacylated tRNA L-seryl-tRNA(Sec), which will be further converted into selenocysteinyl-tRNA(Sec). The sequence is that of Serine--tRNA ligase from Rickettsia africae (strain ESF-5).